Here is a 303-residue protein sequence, read N- to C-terminus: UDP-3-O-acyl-N-acetylglucosamine deacetylase (303 aa).

His78, His237, and Asp241 together coordinate Zn(2+). His264 functions as the Proton donor in the catalytic mechanism.

It belongs to the LpxC family. Zn(2+) is required as a cofactor.

It catalyses the reaction a UDP-3-O-[(3R)-3-hydroxyacyl]-N-acetyl-alpha-D-glucosamine + H2O = a UDP-3-O-[(3R)-3-hydroxyacyl]-alpha-D-glucosamine + acetate. It participates in glycolipid biosynthesis; lipid IV(A) biosynthesis; lipid IV(A) from (3R)-3-hydroxytetradecanoyl-[acyl-carrier-protein] and UDP-N-acetyl-alpha-D-glucosamine: step 2/6. Functionally, catalyzes the hydrolysis of UDP-3-O-myristoyl-N-acetylglucosamine to form UDP-3-O-myristoylglucosamine and acetate, the committed step in lipid A biosynthesis. This Xanthomonas campestris pv. campestris (strain B100) protein is UDP-3-O-acyl-N-acetylglucosamine deacetylase.